The following is a 71-amino-acid chain: uncharacterized protein (71 aa).

Residues 5–22 (VVMCSGLFCSVFAGAFML) traverse the membrane as a helical segment.

It localises to the membrane. This is an uncharacterized protein from Bacillus subtilis (strain 168).